Here is a 223-residue protein sequence, read N- to C-terminus: Kynurenine formamidase (223 aa).

Phe34 serves as a coordination point for substrate. Zn(2+) contacts are provided by His64, His68, and Asp70. His74 acts as the Proton donor/acceptor in catalysis. Zn(2+) contacts are provided by His174 and Glu186.

This sequence belongs to the Cyclase 1 superfamily. KynB family. As to quaternary structure, homodimer. Zn(2+) is required as a cofactor.

The enzyme catalyses N-formyl-L-kynurenine + H2O = L-kynurenine + formate + H(+). The protein operates within amino-acid degradation; L-tryptophan degradation via kynurenine pathway; L-kynurenine from L-tryptophan: step 2/2. Functionally, catalyzes the hydrolysis of N-formyl-L-kynurenine to L-kynurenine, the second step in the kynurenine pathway of tryptophan degradation. This Polaromonas naphthalenivorans (strain CJ2) protein is Kynurenine formamidase.